We begin with the raw amino-acid sequence, 171 residues long: Adenine phosphoribosyltransferase (171 aa).

This sequence belongs to the purine/pyrimidine phosphoribosyltransferase family. Homodimer.

The protein resides in the cytoplasm. The catalysed reaction is AMP + diphosphate = 5-phospho-alpha-D-ribose 1-diphosphate + adenine. It functions in the pathway purine metabolism; AMP biosynthesis via salvage pathway; AMP from adenine: step 1/1. Catalyzes a salvage reaction resulting in the formation of AMP, that is energically less costly than de novo synthesis. This chain is Adenine phosphoribosyltransferase, found in Solidesulfovibrio magneticus (strain ATCC 700980 / DSM 13731 / RS-1) (Desulfovibrio magneticus).